A 252-amino-acid polypeptide reads, in one-letter code: Aspartate/glutamate leucyltransferase (252 aa).

Belongs to the R-transferase family. Bpt subfamily.

Its subcellular location is the cytoplasm. It catalyses the reaction N-terminal L-glutamyl-[protein] + L-leucyl-tRNA(Leu) = N-terminal L-leucyl-L-glutamyl-[protein] + tRNA(Leu) + H(+). The enzyme catalyses N-terminal L-aspartyl-[protein] + L-leucyl-tRNA(Leu) = N-terminal L-leucyl-L-aspartyl-[protein] + tRNA(Leu) + H(+). Functions in the N-end rule pathway of protein degradation where it conjugates Leu from its aminoacyl-tRNA to the N-termini of proteins containing an N-terminal aspartate or glutamate. This is Aspartate/glutamate leucyltransferase from Hyphomonas neptunium (strain ATCC 15444).